Here is a 275-residue protein sequence, read N- to C-terminus: Large ribosomal subunit protein uL2 (275 aa).

Residues 214–275 form a disordered region; it reads RWRGNRPTVR…NKFILSHRNK (62 aa). Residues 255–275 are compositionally biased toward basic residues; that stretch reads KGKKTRSNKRTNKFILSHRNK.

Belongs to the universal ribosomal protein uL2 family. In terms of assembly, part of the 50S ribosomal subunit. Forms a bridge to the 30S subunit in the 70S ribosome.

In terms of biological role, one of the primary rRNA binding proteins. Required for association of the 30S and 50S subunits to form the 70S ribosome, for tRNA binding and peptide bond formation. It has been suggested to have peptidyltransferase activity; this is somewhat controversial. Makes several contacts with the 16S rRNA in the 70S ribosome. This Blochmanniella pennsylvanica (strain BPEN) protein is Large ribosomal subunit protein uL2.